We begin with the raw amino-acid sequence, 40 residues long: Photosystem II reaction center protein J (40 aa).

The helical transmembrane segment at 8-28 (IPLWVVATIAGLGVITVVGIF) threads the bilayer.

This sequence belongs to the PsbJ family. As to quaternary structure, PSII is composed of 1 copy each of membrane proteins PsbA, PsbB, PsbC, PsbD, PsbE, PsbF, PsbH, PsbI, PsbJ, PsbK, PsbL, PsbM, PsbT, PsbX, PsbY, PsbZ, Psb30/Ycf12, peripheral proteins PsbO, CyanoQ (PsbQ), PsbU, PsbV and a large number of cofactors. It forms dimeric complexes.

It localises to the cellular thylakoid membrane. In terms of biological role, one of the components of the core complex of photosystem II (PSII). PSII is a light-driven water:plastoquinone oxidoreductase that uses light energy to abstract electrons from H(2)O, generating O(2) and a proton gradient subsequently used for ATP formation. It consists of a core antenna complex that captures photons, and an electron transfer chain that converts photonic excitation into a charge separation. The protein is Photosystem II reaction center protein J of Nostoc sp. (strain PCC 7120 / SAG 25.82 / UTEX 2576).